The sequence spans 439 residues: Fibulin-7 (439 aa).

The N-terminal stretch at 1–24 is a signal peptide; that stretch reads MVPSSPRALFLLLLILACPEPRAS. Residues 28 to 53 are a coiled coil; the sequence is LSKQQLLSAIRQLQQLLKGQETRFAE. The Sushi domain occupies 79 to 136; sequence VSCPALNTPADGRKFGSKYLVDHEVHFTCNPGFRLVGPSSVVCLPNGTWTGEQPHCRG. Cystine bridges form between C81-C121, C107-C134, C140-C151, C145-C160, C162-C171, C228-C244, C240-C253, C255-C268, C274-C287, C281-C296, and C301-C318. N124 is a glycosylation site (N-linked (GlcNAc...) asparagine). Residues 136-172 form the EGF-like 1; calcium-binding domain; it reads GISECSSQPCQNGGTCVEGVNQYRCICPPGRTGNRCQ. The EGF-like 2; calcium-binding domain maps to 224-269; the sequence is DVNECELYGQEGRPRLCMHACVNTPGSYRCTCPGGYRTLADGKSCE. The 50-residue stretch at 270–319 folds into the EGF-like 3; calcium-binding domain; that stretch reads DVDECVGLQPVCPQGTTCINTGGSFQCVSPECPEGSGNVSYVKTSPFQCE. A glycan (N-linked (GlcNAc...) asparagine) is linked at N307.

This sequence belongs to the fibulin family. As to quaternary structure, interacts with heparin, FBLN1, FN1 and DSPP. Preferentially binds dental mesenchyme cells and odontoblasts but not dental epithelial cells or nondental cells. Binding requires a heparan sulfate-containing receptor on the cell surface as well as an integrin. N-glycosylated.

It is found in the secreted. The protein resides in the extracellular space. It localises to the extracellular matrix. In terms of biological role, an adhesion molecule that interacts with extracellular matrix molecules in developing teeth and may play important roles in differentiation and maintenance of odontoblasts as well as in dentin formation. The polypeptide is Fibulin-7 (FBLN7) (Homo sapiens (Human)).